The chain runs to 761 residues: Phosphoribosylformylglycinamidine synthase subunit PurL (761 aa).

Histidine 49 is a catalytic residue. The ATP site is built by tyrosine 52 and lysine 92. Glutamate 94 is a Mg(2+) binding site. Substrate is bound by residues 95-98 and arginine 117; that span reads SHNH. Catalysis depends on histidine 96, which acts as the Proton acceptor. Position 118 (aspartate 118) interacts with Mg(2+). Glutamine 241 contributes to the substrate binding site. Aspartate 269 contributes to the Mg(2+) binding site. 318 to 320 is a substrate binding site; it reads ESQ. Asparagine 502 and glycine 539 together coordinate ATP. Asparagine 540 provides a ligand contact to Mg(2+). Serine 542 contributes to the substrate binding site.

Belongs to the FGAMS family. Monomer. Part of the FGAM synthase complex composed of 1 PurL, 1 PurQ and 2 PurS subunits.

It is found in the cytoplasm. It carries out the reaction N(2)-formyl-N(1)-(5-phospho-beta-D-ribosyl)glycinamide + L-glutamine + ATP + H2O = 2-formamido-N(1)-(5-O-phospho-beta-D-ribosyl)acetamidine + L-glutamate + ADP + phosphate + H(+). It functions in the pathway purine metabolism; IMP biosynthesis via de novo pathway; 5-amino-1-(5-phospho-D-ribosyl)imidazole from N(2)-formyl-N(1)-(5-phospho-D-ribosyl)glycinamide: step 1/2. In terms of biological role, part of the phosphoribosylformylglycinamidine synthase complex involved in the purines biosynthetic pathway. Catalyzes the ATP-dependent conversion of formylglycinamide ribonucleotide (FGAR) and glutamine to yield formylglycinamidine ribonucleotide (FGAM) and glutamate. The FGAM synthase complex is composed of three subunits. PurQ produces an ammonia molecule by converting glutamine to glutamate. PurL transfers the ammonia molecule to FGAR to form FGAM in an ATP-dependent manner. PurS interacts with PurQ and PurL and is thought to assist in the transfer of the ammonia molecule from PurQ to PurL. The sequence is that of Phosphoribosylformylglycinamidine synthase subunit PurL from Chlorobium luteolum (strain DSM 273 / BCRC 81028 / 2530) (Pelodictyon luteolum).